A 482-amino-acid polypeptide reads, in one-letter code: GTPase Obg (482 aa).

In terms of domain architecture, Obg spans 2–159 (PRFIDRVVVH…RELTLELKTV (158 aa)). In terms of domain architecture, OBG-type G spans 160–341 (ADVGLVGFPS…LIFALWDMVA (182 aa)). Residues 166-173 (GFPSAGKS), 191-195 (FTTLA), 212-215 (DVPG), 292-295 (NKID), and 322-324 (STV) contribute to the GTP site. Positions 173 and 193 each coordinate Mg(2+). The region spanning 359 to 437 (PIPVDETAFS…IGDMTFDWEP (79 aa)) is the OCT domain. Residues 450–482 (RGTDVRLEQTDRVGADERKAARKARRQSDDGEE) are disordered. A compositionally biased stretch (basic and acidic residues) spans 452 to 468 (TDVRLEQTDRVGADERK).

The protein belongs to the TRAFAC class OBG-HflX-like GTPase superfamily. OBG GTPase family. As to quaternary structure, monomer. It depends on Mg(2+) as a cofactor.

Its subcellular location is the cytoplasm. An essential GTPase which binds GTP, GDP and possibly (p)ppGpp with moderate affinity, with high nucleotide exchange rates and a fairly low GTP hydrolysis rate. Plays a role in control of the cell cycle, stress response, ribosome biogenesis and in those bacteria that undergo differentiation, in morphogenesis control. This is GTPase Obg from Mycolicibacterium gilvum (strain PYR-GCK) (Mycobacterium gilvum (strain PYR-GCK)).